A 138-amino-acid polypeptide reads, in one-letter code: Putative pre-16S rRNA nuclease (138 aa).

It belongs to the YqgF nuclease family.

The protein localises to the cytoplasm. In terms of biological role, could be a nuclease involved in processing of the 5'-end of pre-16S rRNA. The sequence is that of Putative pre-16S rRNA nuclease from Mycoplasma genitalium (strain ATCC 33530 / DSM 19775 / NCTC 10195 / G37) (Mycoplasmoides genitalium).